The sequence spans 144 residues: D-aminoacyl-tRNA deacylase (144 aa).

The Gly-cisPro motif, important for rejection of L-amino acids signature appears at 136-137 (GP).

Belongs to the DTD family. Homodimer.

The protein localises to the cytoplasm. The catalysed reaction is glycyl-tRNA(Ala) + H2O = tRNA(Ala) + glycine + H(+). It carries out the reaction a D-aminoacyl-tRNA + H2O = a tRNA + a D-alpha-amino acid + H(+). Its function is as follows. An aminoacyl-tRNA editing enzyme that deacylates mischarged D-aminoacyl-tRNAs. Also deacylates mischarged glycyl-tRNA(Ala), protecting cells against glycine mischarging by AlaRS. Acts via tRNA-based rather than protein-based catalysis; rejects L-amino acids rather than detecting D-amino acids in the active site. By recycling D-aminoacyl-tRNA to D-amino acids and free tRNA molecules, this enzyme counteracts the toxicity associated with the formation of D-aminoacyl-tRNA entities in vivo and helps enforce protein L-homochirality. The polypeptide is D-aminoacyl-tRNA deacylase (Vibrio cholerae serotype O1 (strain ATCC 39541 / Classical Ogawa 395 / O395)).